Here is a 300-residue protein sequence, read N- to C-terminus: MALVAGLRAFGAKWPSWLRRSPWAPLSAGFCSPGSARPAGPESEPRLTSTRQQDGIRNIVLSNPRRRNALSLAMLKSLRSDILHEAESEDLKVIIISAEGPVFSSGHDLKELTGAQGRDYHTEVFQTCSEVMMLIRNHPVPIVAMVNGLATAAGCQLVASCDIAVASDKSSFATPGVNVGLFCSTPAVALGRAVPRKVALEMLFTGEPISAQEALRHGLISKVVPEEQLEEEATRIAKKIASLSRSVVALGKATFYKQLPQDLSTAYFLASQAMVDNLTLKDGQEGIEAFIQKRRPVWSH.

A mitochondrion-targeting transit peptide spans 1-66; that stretch reads MALVAGLRAF…RNIVLSNPRR (66 aa). The interval 32–54 is disordered; it reads SPGSARPAGPESEPRLTSTRQQD. Lysine 110 carries the post-translational modification N6-succinyllysine.

The protein belongs to the enoyl-CoA hydratase/isomerase family.

The protein resides in the mitochondrion. May play a role in fatty acid biosynthesis and insulin sensitivity. The sequence is that of Enoyl-CoA hydratase domain-containing protein 3, mitochondrial from Rattus norvegicus (Rat).